Reading from the N-terminus, the 437-residue chain is Trigger factor (437 aa).

Positions 163–248 constitute a PPIase FKBP-type domain; sequence GDIAVINFEG…LNQIKAKVLP (86 aa).

The protein belongs to the FKBP-type PPIase family. Tig subfamily.

The protein localises to the cytoplasm. The enzyme catalyses [protein]-peptidylproline (omega=180) = [protein]-peptidylproline (omega=0). In terms of biological role, involved in protein export. Acts as a chaperone by maintaining the newly synthesized protein in an open conformation. Functions as a peptidyl-prolyl cis-trans isomerase. This Bdellovibrio bacteriovorus (strain ATCC 15356 / DSM 50701 / NCIMB 9529 / HD100) protein is Trigger factor.